A 446-amino-acid polypeptide reads, in one-letter code: Serine--tRNA ligase, mitochondrial (446 aa).

251-253 is an L-serine binding site; the sequence is TAE. ATP contacts are provided by residues 284–286 and valine 300; that span reads RAE. Glutamate 307 is an L-serine binding site. ATP is bound at residue 371-374; that stretch reads EISS. Threonine 407 lines the L-serine pocket.

It belongs to the class-II aminoacyl-tRNA synthetase family. Type-1 seryl-tRNA synthetase subfamily. As to quaternary structure, homodimer. The tRNA molecule binds across the dimer.

The protein localises to the mitochondrion matrix. It catalyses the reaction tRNA(Ser) + L-serine + ATP = L-seryl-tRNA(Ser) + AMP + diphosphate + H(+). In terms of biological role, catalyzes the attachment of serine to tRNA(Ser). The polypeptide is Serine--tRNA ligase, mitochondrial (DIA4) (Saccharomyces cerevisiae (strain ATCC 204508 / S288c) (Baker's yeast)).